A 431-amino-acid polypeptide reads, in one-letter code: Mannan endo-1,4-beta-mannosidase 7 (431 aa).

The N-terminal stretch at 1–25 (MKLLALFPFLAIVIQLSCWELGTDA) is a signal peptide. Substrate-binding residues include W87 and N202. E203 acts as the Proton donor in catalysis. Y280 provides a ligand contact to substrate. The active-site Nucleophile is E320. W362 is a binding site for substrate.

The protein belongs to the glycosyl hydrolase 5 (cellulase A) family. Expressed in stems, flowers, siliques and seeds. Expressed in root vasculature, leaf hydathodes, anther filaments, stigma, sepal vasculature, at the base and apical parts of siliques, and replum. Expressed in the micropylar endosperm and radicle tip in early germinating seeds.

Its subcellular location is the secreted. It catalyses the reaction Random hydrolysis of (1-&gt;4)-beta-D-mannosidic linkages in mannans, galactomannans and glucomannans.. Required for both, loosening of the micropylar endosperm, and rupture of the seed coat in germinating seeds. May participate in the hydrolysis of the mannans in the cell wall of germinating seeds. The chain is Mannan endo-1,4-beta-mannosidase 7 (MAN7) from Arabidopsis thaliana (Mouse-ear cress).